The primary structure comprises 90 residues: MALNLEKKQEIIKAFATKENDTGSCEVQVALLNERIKLLTEHLKANPKDHSSRLGLLKLVAQRRNLLKYIKRTNHARYVVLIEKLGIKDR.

The protein belongs to the universal ribosomal protein uS15 family. In terms of assembly, part of the 30S ribosomal subunit. Forms a bridge to the 50S subunit in the 70S ribosome, contacting the 23S rRNA.

Functionally, one of the primary rRNA binding proteins, it binds directly to 16S rRNA where it helps nucleate assembly of the platform of the 30S subunit by binding and bridging several RNA helices of the 16S rRNA. Forms an intersubunit bridge (bridge B4) with the 23S rRNA of the 50S subunit in the ribosome. The chain is Small ribosomal subunit protein uS15 from Helicobacter pylori (strain HPAG1).